The sequence spans 2515 residues: Probable maltase-glucoamylase 2 (2515 aa).

Over 1–9 (MARKLSVLE) the chain is Cytoplasmic. A helical membrane pass occupies residues 10–30 (VLLIIFCLIVVTIDILLLLLV). Residues 31–482 (LEETSDTSFT…DGVWIEMNEV (452 aa)) are Lumenal-facing. The P-type 1 domain maps to 41-88 (PECPEIPQSERIDCTPDQEVTEDICRWQYKCCWSPVADANVPRCFFPW). 3 cysteine pairs are disulfide-bonded: C43/C72, C54/C71, and C65/C84. Residues 152-865 (SHENINLVDG…MDKQPANFIV (714 aa)) are maltase. N167 is a glycosylation site (N-linked (GlcNAc...) asparagine). A Sulfotyrosine modification is found at Y371. N421 carries N-linked (GlcNAc...) asparagine glycosylation. Residue E478 is the Nucleophile of the active site. The active site involves E481. Disulfide bonds link C608-C619, C916-C933, and C928-C946. N613 carries N-linked (GlcNAc...) asparagine glycosylation. The P-type 2 domain maps to 904–950 (WNLPVSDLEKFNCYPDDPTASEESCRQRGCLWEDTSTPGVPTCYYDT). Positions 1023-1766 (PLNTPPQPVG…GVNTYVTQVS (744 aa)) are glucoamylase. The residue at position 1238 (Y1238) is a Sulfotyrosine. Residue D1375 is the Nucleophile of the active site. The active site involves E1378. 3 disordered regions span residues 1816 to 1901 (TPTK…PITT), 1994 to 2015 (STTV…STNA), and 2037 to 2091 (TVPD…SSTT). Residues 1817 to 1831 (PTKTSTIPMSSHPSP) show a composition bias toward polar residues. Over residues 1832–1901 (STTNATSSET…STNATVPITT (70 aa)) the composition is skewed to low complexity. A glycan (N-linked (GlcNAc...) asparagine) is linked at N2249.

The protein belongs to the glycosyl hydrolase 31 family.

Its subcellular location is the membrane. The enzyme catalyses Hydrolysis of terminal (1-&gt;4)-linked alpha-D-glucose residues successively from non-reducing ends of the chains with release of beta-D-glucose.. The chain is Probable maltase-glucoamylase 2 from Homo sapiens (Human).